The primary structure comprises 352 residues: Pyrimidine monooxygenase RutA (352 aa).

Residues 49 to 50 (IK), Asn115, Glu124, 140 to 141 (RY), and Ser189 each bind FMN.

This sequence belongs to the NtaA/SnaA/DszA monooxygenase family. RutA subfamily.

The catalysed reaction is uracil + FMNH2 + NADH + O2 = (Z)-3-ureidoacrylate + FMN + NAD(+) + H2O + H(+). It catalyses the reaction thymine + FMNH2 + NADH + O2 = (Z)-2-methylureidoacrylate + FMN + NAD(+) + H2O + H(+). In terms of biological role, catalyzes the pyrimidine ring opening between N-3 and C-4 by an unusual flavin hydroperoxide-catalyzed mechanism, adding oxygen atoms in the process to yield ureidoacrylate peracid, that immediately reacts with FMN forming ureidoacrylate and FMN-N(5)-oxide. The FMN-N(5)-oxide reacts spontaneously with NADH to produce FMN. Requires the flavin reductase RutF to regenerate FMN in vivo. The protein is Pyrimidine monooxygenase RutA of Caulobacter segnis (strain ATCC 21756 / DSM 7131 / JCM 7823 / NBRC 15250 / LMG 17158 / TK0059) (Mycoplana segnis).